Here is a 27-residue protein sequence, read N- to C-terminus: Pregnancy-associated glycoprotein 59 (27 aa).

Belongs to the peptidase A1 family. Glycosylated. In terms of tissue distribution, placenta.

The chain is Pregnancy-associated glycoprotein 59 (PAG59) from Capra hircus (Goat).